A 750-amino-acid chain; its full sequence is Photosystem I P700 chlorophyll a apoprotein A1 (750 aa).

The next 8 membrane-spanning stretches (helical) occupy residues 70–93 (VFSA…FHGA), 156–179 (LYCT…FHYH), 195–219 (LNHH…HVSL), 291–309 (IAHH…GHMY), 346–369 (WHAQ…HHMY), 385–411 (LSLF…IFMV), 433–455 (AIIS…LYIH), and 531–549 (FLVH…LILL). [4Fe-4S] cluster is bound by residues cysteine 573 and cysteine 582. Transmembrane regions (helical) follow at residues 589–610 (HVFL…HFSW) and 664–686 (LSAY…MFLF). Residue histidine 675 participates in chlorophyll a' binding. The chlorophyll a site is built by methionine 683 and tyrosine 691. Residue tryptophan 692 coordinates phylloquinone. A helical transmembrane segment spans residues 724–744 (AVGVTHYLLGGIATTWAFFLA).

The protein belongs to the PsaA/PsaB family. In terms of assembly, the PsaA/B heterodimer binds the P700 chlorophyll special pair and subsequent electron acceptors. PSI consists of a core antenna complex that captures photons, and an electron transfer chain that converts photonic excitation into a charge separation. The eukaryotic PSI reaction center is composed of at least 11 subunits. Requires P700 is a chlorophyll a/chlorophyll a' dimer, A0 is one or more chlorophyll a, A1 is one or both phylloquinones and FX is a shared 4Fe-4S iron-sulfur center. as cofactor.

The protein resides in the plastid. It localises to the chloroplast thylakoid membrane. It catalyses the reaction reduced [plastocyanin] + hnu + oxidized [2Fe-2S]-[ferredoxin] = oxidized [plastocyanin] + reduced [2Fe-2S]-[ferredoxin]. Its function is as follows. PsaA and PsaB bind P700, the primary electron donor of photosystem I (PSI), as well as the electron acceptors A0, A1 and FX. PSI is a plastocyanin-ferredoxin oxidoreductase, converting photonic excitation into a charge separation, which transfers an electron from the donor P700 chlorophyll pair to the spectroscopically characterized acceptors A0, A1, FX, FA and FB in turn. Oxidized P700 is reduced on the lumenal side of the thylakoid membrane by plastocyanin. The polypeptide is Photosystem I P700 chlorophyll a apoprotein A1 (Arabis hirsuta (Hairy rock-cress)).